The chain runs to 334 residues: Leucine-rich repeat-containing protein 26 (334 aa).

The N-terminal stretch at 1–26 (MRGPSWSRPRPLLLLLLLLSPWPVWA) is a signal peptide. Topologically, residues 27 to 261 (QVSATASPSG…HCAQPLALRD (235 aa)) are extracellular. An LRRNT domain is found at 34 to 71 (PSGSLGAPDCPEVCTCVPGGLASCSALSLPAVPPGLSL). Intrachain disulfides connect C43–C49 and C47–C57. LRR repeat units follow at residues 72–93 (RLRALLLDHNRVRALPPGAFAG), 96–117 (ALQRLDLRENGLHSVHVRAFWG), 120–141 (ALQLLDLSANQLEALAPGTFAP), 144–167 (ALRNLSLAGNRLARLEPAALGALP), and 168–190 (LLRSLSLQDNELAALAPGLLGRL). N147 carries N-linked (GlcNAc...) asparagine glycosylation. The LRRCT domain maps to 201–255 (NPWGCGCALRPLCAWLRRHPLPASEAETVLCVWPGRLTLSPLTAFSDAAFSHCAQ). 2 disulfide bridges follow: C205-C231 and C207-C253. The chain crosses the membrane as a helical span at residues 262-282 (LAVVYTLGPASFLVSLASCLA). Topologically, residues 283–334 (LGSGLTACRARRRRLRTAALRPPRPPDPNPDPDPHGCASPADPGSPAAAAQA) are cytoplasmic. Residues 298-334 (RTAALRPPRPPDPNPDPDPHGCASPADPGSPAAAAQA) are disordered. Over residues 304–313 (PPRPPDPNPD) the composition is skewed to pro residues. The span at 320–334 (ASPADPGSPAAAAQA) shows a compositional bias: low complexity.

In terms of assembly, interacts with KCNMA1. Isoform 1 is expressed highly in normal prostate and salivary gland, very weakly in colon, pancreas, and intestine, and not at all in other tissues. Isoform 1 is expressed highly in many cancer cell lines and in breast cancer, pancreatic cancer and colon cancer. Isoform 2 is expressed in cancer cell lines.

It localises to the cell membrane. It is found in the cytoplasm. Its subcellular location is the cytoskeleton. Functionally, auxiliary protein of the large-conductance, voltage and calcium-activated potassium channel (BK alpha). Required for the conversion of BK alpha channels from a high-voltage to a low-voltage activated channel type in non-excitable cells. These are characterized by negative membrane voltages and constant low levels of calcium. The polypeptide is Leucine-rich repeat-containing protein 26 (LRRC26) (Homo sapiens (Human)).